Reading from the N-terminus, the 87-residue chain is Translation initiation factor IF-1 1 (87 aa).

One can recognise an S1-like domain in the interval 1–72 (MAKEELLELD…TKGRINFRHK (72 aa)). Residues 68-87 (NFRHKDANSPRPPRTGQPRR) form a disordered region. A compositionally biased stretch (pro residues) spans 77-87 (PRPPRTGQPRR).

It belongs to the IF-1 family. As to quaternary structure, component of the 30S ribosomal translation pre-initiation complex which assembles on the 30S ribosome in the order IF-2 and IF-3, IF-1 and N-formylmethionyl-tRNA(fMet); mRNA recruitment can occur at any time during PIC assembly.

The protein localises to the cytoplasm. Functionally, one of the essential components for the initiation of protein synthesis. Stabilizes the binding of IF-2 and IF-3 on the 30S subunit to which N-formylmethionyl-tRNA(fMet) subsequently binds. Helps modulate mRNA selection, yielding the 30S pre-initiation complex (PIC). Upon addition of the 50S ribosomal subunit IF-1, IF-2 and IF-3 are released leaving the mature 70S translation initiation complex. This Burkholderia lata (strain ATCC 17760 / DSM 23089 / LMG 22485 / NCIMB 9086 / R18194 / 383) protein is Translation initiation factor IF-1 1.